The primary structure comprises 236 residues: Protein-L-isoaspartate O-methyltransferase 1 (236 aa).

Ser-86 is a catalytic residue.

It belongs to the methyltransferase superfamily. L-isoaspartyl/D-aspartyl protein methyltransferase family.

It is found in the cytoplasm. It catalyses the reaction [protein]-L-isoaspartate + S-adenosyl-L-methionine = [protein]-L-isoaspartate alpha-methyl ester + S-adenosyl-L-homocysteine. Its function is as follows. Catalyzes the methyl esterification of L-isoaspartyl residues in peptides and proteins that result from spontaneous decomposition of normal L-aspartyl and L-asparaginyl residues. It plays a role in the repair and/or degradation of damaged proteins. This chain is Protein-L-isoaspartate O-methyltransferase 1, found in Nitrosospira multiformis (strain ATCC 25196 / NCIMB 11849 / C 71).